The chain runs to 142 residues: Large-conductance mechanosensitive channel (142 aa).

Helical transmembrane passes span 10-30 (FAVK…GAFG), 40-60 (LIMP…LFVV), and 86-106 (GNFI…FMMV).

It belongs to the MscL family. Homopentamer.

The protein localises to the cell inner membrane. In terms of biological role, channel that opens in response to stretch forces in the membrane lipid bilayer. May participate in the regulation of osmotic pressure changes within the cell. This chain is Large-conductance mechanosensitive channel, found in Delftia acidovorans (strain DSM 14801 / SPH-1).